The following is a 298-amino-acid chain: Pheromone-regulated membrane protein 9 (298 aa).

At 1 to 111 (MSPQYHFYFV…YWIYEVTRHK (111 aa)) the chain is on the cytoplasmic side. A helical transmembrane segment spans residues 112-132 (AAVILLVLIVTSILLLVFFYN). Topologically, residues 133–137 (TEFCV) are extracellular. Residues 138–158 (AFEILLFSFCFPGTCMVVIAF) form a helical membrane-spanning segment. The Cytoplasmic portion of the chain corresponds to 159–298 (SEPIGDREFK…QEYPGVDEFF (140 aa)). Residues 235–262 (SSASNVKDAQSNDETAGTPNEAAESSSF) form a disordered region. Residues 297–298 (FF) form a COPII binding region.

The protein belongs to the DUP/COS family. Interacts with PRM8. Binds to COPII coated vesicles.

Its subcellular location is the cell membrane. Functionally, may be involved in endoplasmic reticulum exit trafficking of proteins. The polypeptide is Pheromone-regulated membrane protein 9 (PRM9) (Saccharomyces cerevisiae (strain ATCC 204508 / S288c) (Baker's yeast)).